A 270-amino-acid chain; its full sequence is NAD(P)H-hydrate epimerase (270 aa).

A YjeF N-terminal domain is found at 25 to 234 (FQQLMDLMQN…DLLAPEAIYQ (210 aa)). 73 to 77 (DNGGQ) is a binding site for (6S)-NADPHX. K(+) is bound by residues Asn-74 and Asp-144. Residues 148–154 (GVGLYGH) and Glu-177 each bind (6S)-NADPHX. K(+) is bound at residue Thr-180.

Belongs to the NnrE/AIBP family. Requires K(+) as cofactor.

It carries out the reaction (6R)-NADHX = (6S)-NADHX. The enzyme catalyses (6R)-NADPHX = (6S)-NADPHX. In terms of biological role, catalyzes the epimerization of the S- and R-forms of NAD(P)HX, a damaged form of NAD(P)H that is a result of enzymatic or heat-dependent hydration. This is a prerequisite for the S-specific NAD(P)H-hydrate dehydratase to allow the repair of both epimers of NAD(P)HX. This chain is NAD(P)H-hydrate epimerase, found in Legionella pneumophila subsp. pneumophila (strain Philadelphia 1 / ATCC 33152 / DSM 7513).